The chain runs to 166 residues: 2-C-methyl-D-erythritol 2,4-cyclodiphosphate synthase (166 aa).

A divalent metal cation-binding residues include Asp-15 and His-17. 4-CDP-2-C-methyl-D-erythritol 2-phosphate is bound by residues 15 to 17 (DIH) and 43 to 44 (HS). His-51 is a binding site for a divalent metal cation. 4-CDP-2-C-methyl-D-erythritol 2-phosphate-binding positions include 65–67 (DIG), 141–144 (TTNE), and Arg-151.

This sequence belongs to the IspF family. Homotrimer. It depends on a divalent metal cation as a cofactor.

The enzyme catalyses 4-CDP-2-C-methyl-D-erythritol 2-phosphate = 2-C-methyl-D-erythritol 2,4-cyclic diphosphate + CMP. The protein operates within isoprenoid biosynthesis; isopentenyl diphosphate biosynthesis via DXP pathway; isopentenyl diphosphate from 1-deoxy-D-xylulose 5-phosphate: step 4/6. Involved in the biosynthesis of isopentenyl diphosphate (IPP) and dimethylallyl diphosphate (DMAPP), two major building blocks of isoprenoid compounds. Catalyzes the conversion of 4-diphosphocytidyl-2-C-methyl-D-erythritol 2-phosphate (CDP-ME2P) to 2-C-methyl-D-erythritol 2,4-cyclodiphosphate (ME-CPP) with a corresponding release of cytidine 5-monophosphate (CMP). The sequence is that of 2-C-methyl-D-erythritol 2,4-cyclodiphosphate synthase from Prochlorococcus marinus (strain MIT 9215).